Here is a 373-residue protein sequence, read N- to C-terminus: Cobalt-precorrin-5B C(1)-methyltransferase (373 aa).

The protein belongs to the CbiD family.

The catalysed reaction is Co-precorrin-5B + S-adenosyl-L-methionine = Co-precorrin-6A + S-adenosyl-L-homocysteine. It functions in the pathway cofactor biosynthesis; adenosylcobalamin biosynthesis; cob(II)yrinate a,c-diamide from sirohydrochlorin (anaerobic route): step 6/10. Catalyzes the methylation of C-1 in cobalt-precorrin-5B to form cobalt-precorrin-6A. The chain is Cobalt-precorrin-5B C(1)-methyltransferase from Polaromonas sp. (strain JS666 / ATCC BAA-500).